The following is a 372-amino-acid chain: Cobalt-precorrin-5B C(1)-methyltransferase (372 aa).

This sequence belongs to the CbiD family.

It carries out the reaction Co-precorrin-5B + S-adenosyl-L-methionine = Co-precorrin-6A + S-adenosyl-L-homocysteine. Its pathway is cofactor biosynthesis; adenosylcobalamin biosynthesis; cob(II)yrinate a,c-diamide from sirohydrochlorin (anaerobic route): step 6/10. In terms of biological role, catalyzes the methylation of C-1 in cobalt-precorrin-5B to form cobalt-precorrin-6A. The protein is Cobalt-precorrin-5B C(1)-methyltransferase of Prochlorococcus marinus subsp. pastoris (strain CCMP1986 / NIES-2087 / MED4).